A 150-amino-acid chain; its full sequence is Large ribosomal subunit protein uL15 (150 aa).

The tract at residues 1–57 (MSLTLQSLKPQKGARRRKMRKGRGIAAGQGASCGFGMRGQKSRSGRPTRPGFEGGQM) is disordered. The span at 12–23 (KGARRRKMRKGR) shows a compositional bias: basic residues. Residues 25 to 37 (IAAGQGASCGFGM) are compositionally biased toward gly residues.

This sequence belongs to the universal ribosomal protein uL15 family. Part of the 50S ribosomal subunit.

Its function is as follows. Binds to the 23S rRNA. In Synechococcus sp. (strain RCC307), this protein is Large ribosomal subunit protein uL15.